Here is a 46-residue protein sequence, read N- to C-terminus: Endochitinase 4 (46 aa).

This sequence belongs to the glycosyl hydrolase 19 family. Chitinase class I subfamily.

The catalysed reaction is Random endo-hydrolysis of N-acetyl-beta-D-glucosaminide (1-&gt;4)-beta-linkages in chitin and chitodextrins.. Functionally, defense against chitin-containing fungal and bacterial pathogens. The polypeptide is Endochitinase 4 (Arachis hypogaea (Peanut)).